We begin with the raw amino-acid sequence, 79 residues long: uncharacterized protein (79 aa).

Positions 1 to 24 (MKMNPCTVILCKSLFFFCLFQVDC) are cleaved as a signal peptide. Asn33 carries an N-linked (GlcNAc...) asparagine glycan.

The protein resides in the secreted. This is an uncharacterized protein from Saccharomyces cerevisiae (strain ATCC 204508 / S288c) (Baker's yeast).